A 307-amino-acid chain; its full sequence is tRNA pseudouridine synthase B (307 aa).

The Nucleophile role is filled by D38.

Belongs to the pseudouridine synthase TruB family. Type 1 subfamily.

The enzyme catalyses uridine(55) in tRNA = pseudouridine(55) in tRNA. Functionally, responsible for synthesis of pseudouridine from uracil-55 in the psi GC loop of transfer RNAs. This Bacillus cytotoxicus (strain DSM 22905 / CIP 110041 / 391-98 / NVH 391-98) protein is tRNA pseudouridine synthase B.